The sequence spans 313 residues: Ribonuclease HIII (313 aa).

In terms of domain architecture, RNase H type-2 spans 94 to 310 (MSVIGSDEVG…TQKAKRLVER (217 aa)). A divalent metal cation-binding residues include Asp-100, Glu-101, and Asp-205.

The protein belongs to the RNase HII family. RnhC subfamily. Requires Mn(2+) as cofactor. The cofactor is Mg(2+).

The protein resides in the cytoplasm. The catalysed reaction is Endonucleolytic cleavage to 5'-phosphomonoester.. Its function is as follows. Endonuclease that specifically degrades the RNA of RNA-DNA hybrids. In Bacillus velezensis (strain DSM 23117 / BGSC 10A6 / LMG 26770 / FZB42) (Bacillus amyloliquefaciens subsp. plantarum), this protein is Ribonuclease HIII.